The sequence spans 326 residues: Vitamin B12 import system permease protein BtuC (326 aa).

The Cytoplasmic portion of the chain corresponds to 1-10 (MLTLARQQQR). A helical membrane pass occupies residues 11–35 (QNIRWLLCLSVLMLLALLLSLCAGE). Residues 36–56 (QWISPGDWFSPRGELFVWQIR) are Periplasmic-facing. The chain crosses the membrane as a helical span at residues 57 to 81 (LPRTLAVLLVGAALAISGAVMQALF). The Cytoplasmic portion of the chain corresponds to 82-92 (ENPLAEPGLLG). A helical transmembrane segment spans residues 93–107 (VSNGAGVGLIAAVLL). Residues 108–113 (GQGQLP) are Periplasmic-facing. A helical transmembrane segment spans residues 114–138 (NWALGLCAIAGALIITLILLRFARR). At 139-141 (HLS) the chain is on the cytoplasmic side. The helical transmembrane segment at 142–166 (TSRLLLAGVALGIICSALMTWAIYF) threads the bilayer. Residues 167-190 (STSVDLRQLMYWMMGGFGGVDWRQ) lie on the Periplasmic side of the membrane. A helical membrane pass occupies residues 191–206 (SWLMLALIPMLLWICC). Over 207–228 (QSRPMNMLALGEISARQLGLPL) the chain is Cytoplasmic. Residues 229 to 249 (WFWRNVLVAATGWMVGVSVAL) form a helical membrane-spanning segment. Over 250–257 (AGAIGFIG) the chain is Periplasmic. Residues 258–267 (LVIPHILRLC) form a helical membrane-spanning segment. The Cytoplasmic portion of the chain corresponds to 268–274 (GLTDHRA). Residues 275–296 (LLPGCALAGASALLLADIVARL) traverse the membrane as a helical segment. The Periplasmic segment spans residues 297–304 (ALAAAELP). Residues 305–324 (IGVVTATLGAPVFIWLLLKA) traverse the membrane as a helical segment. Over 325-326 (GR) the chain is Cytoplasmic.

It belongs to the binding-protein-dependent transport system permease family. FecCD subfamily. The complex is composed of two ATP-binding proteins (BtuD), two transmembrane proteins (BtuC) and a solute-binding protein (BtuF).

The protein localises to the cell inner membrane. Functionally, part of the ABC transporter complex BtuCDF involved in vitamin B12 import. Involved in the translocation of the substrate across the membrane. The polypeptide is Vitamin B12 import system permease protein BtuC (btuC) (Escherichia coli O157:H7).